A 225-amino-acid chain; its full sequence is ATP-dependent Clp protease proteolytic subunit (225 aa).

The Nucleophile role is filled by S101. H126 is a catalytic residue.

Belongs to the peptidase S14 family. As to quaternary structure, component of the chloroplastic Clp protease core complex.

Its subcellular location is the plastid. The protein resides in the chloroplast stroma. It catalyses the reaction Hydrolysis of proteins to small peptides in the presence of ATP and magnesium. alpha-casein is the usual test substrate. In the absence of ATP, only oligopeptides shorter than five residues are hydrolyzed (such as succinyl-Leu-Tyr-|-NHMec, and Leu-Tyr-Leu-|-Tyr-Trp, in which cleavage of the -Tyr-|-Leu- and -Tyr-|-Trp bonds also occurs).. Its function is as follows. Cleaves peptides in various proteins in a process that requires ATP hydrolysis. Has a chymotrypsin-like activity. Plays a major role in the degradation of misfolded proteins. The chain is ATP-dependent Clp protease proteolytic subunit from Chlorokybus atmophyticus (Soil alga).